A 585-amino-acid polypeptide reads, in one-letter code: Probable glucomannan 4-beta-mannosyltransferase 7 (585 aa).

Residues 87–107 (VIAPTLQVAVWVCMVMSVMLV) traverse the membrane as a helical segment. Residue Asp-188 is part of the active site. Substrate is bound by residues Asp-247 and Asp-249. Asp-341 is a catalytic residue. Transmembrane regions (helical) follow at residues 420 to 440 (VVAPMVACVLYNIIVPLSVMI), 443 to 463 (LFIPIWGVAYIPMALLIITTI), 534 to 554 (LPEIGFSVFLIFCASYNLIFH), and 563 to 583 (LYLQGLAFLLLGFNFTGNFAC).

The protein belongs to the glycosyltransferase 2 family. Plant cellulose synthase-like A subfamily.

It localises to the golgi apparatus membrane. It catalyses the reaction GDP-mannose + (glucomannan)n = GDP + (glucomannan)n+1.. Probable mannan synthase which consists of a 4-beta-mannosyltransferase activity on mannan using GDP-mannose. The beta-1,4-mannan product is the backbone for galactomannan synthesis by galactomannan galactosyltransferase. Galactomannan is a noncellulosic polysaccharides of plant cell wall. In Oryza sativa subsp. japonica (Rice), this protein is Probable glucomannan 4-beta-mannosyltransferase 7.